The following is a 214-amino-acid chain: Adenylate kinase (214 aa).

10 to 15 (GAGKGT) contributes to the ATP binding site. Residues 30–59 (STGDMLRAAVKAGTPLGLEAKKVMDAGQLV) are NMP. AMP-binding positions include T31, R36, 57–59 (QLV), 85–88 (GFPR), and Q92. Residues 122–159 (GRRVHPGSGRVYHIVFNQPKVEGKDDVTGEDLAIRPDD) are LID. Residues R123 and 132 to 133 (VY) each bind ATP. R156 and R167 together coordinate AMP. An ATP-binding site is contributed by Q200.

The protein belongs to the adenylate kinase family. Monomer.

The protein resides in the cytoplasm. The catalysed reaction is AMP + ATP = 2 ADP. The protein operates within purine metabolism; AMP biosynthesis via salvage pathway; AMP from ADP: step 1/1. Catalyzes the reversible transfer of the terminal phosphate group between ATP and AMP. Plays an important role in cellular energy homeostasis and in adenine nucleotide metabolism. In Shewanella piezotolerans (strain WP3 / JCM 13877), this protein is Adenylate kinase.